Reading from the N-terminus, the 318-residue chain is tRNA-dihydrouridine(16) synthase (318 aa).

Residues 7-9 (PME) and Q68 each bind FMN. The active-site Proton donor is C98. FMN is bound by residues K139, 200–202 (NGE), and 224–225 (CR).

This sequence belongs to the Dus family. DusC subfamily. It depends on FMN as a cofactor.

It catalyses the reaction 5,6-dihydrouridine(16) in tRNA + NADP(+) = uridine(16) in tRNA + NADPH + H(+). It carries out the reaction 5,6-dihydrouridine(16) in tRNA + NAD(+) = uridine(16) in tRNA + NADH + H(+). Catalyzes the synthesis of 5,6-dihydrouridine (D), a modified base found in the D-loop of most tRNAs, via the reduction of the C5-C6 double bond in target uridines. Specifically modifies U16 in tRNAs. The sequence is that of tRNA-dihydrouridine(16) synthase from Vibrio vulnificus (strain CMCP6).